The following is a 315-amino-acid chain: MGDQLILATGGYDHTIKVWQAHTGNCIKTMRFVETSQVNALDRTPDKTRLAACGYQCIRLYDLESNCTAPVINFDGVQKNVTRLGFQEDGNWMFTAGEDHHVRIWDMISAPPHCSRVFDCESPVNAACLHPNQVEIGMGSQNGNVFLWDVKSEKHECIVPEVDASIQDVAISPDGHYLAAANNKGNCYIWSLCSSPDQKMSTMRPTKKIQAHTRYILRCKFSPDSRLLLTTSGDGTACLWKTSDFSKWRELCIENYWVWDAAFSADSKWLFTASSDGVARLWKLETKTPTREYTGHTKAITALSFKDEIIRKVNH.

WD repeat units follow at residues 1 to 31, 33 to 71, 76 to 115, 119 to 158, 161 to 200, 211 to 250, 253 to 292, and 295 to 315; these read MGDQ…KTMR, VETS…TAPV, GVQK…PHCS, DCES…HECI, EVDA…DQKM, AHTR…KWRE, IENY…PTRE, and GHTK…KVNH.

This sequence belongs to the WD repeat LST8 family.

Its subcellular location is the cytoplasm. The polypeptide is Protein LST8 homolog (Drosophila pseudoobscura pseudoobscura (Fruit fly)).